The sequence spans 79 residues: MSVIINYDKLLKRIRHKYAIPIAAARRAEGLKDFGRPKLDPQMVKQAGDKINIALKELEEGRIVIRNEEMLKILVPKVK.

Belongs to the RNA polymerase subunit omega family. As to quaternary structure, the RNAP catalytic core consists of 2 alpha, 1 beta, 1 beta' and 1 omega subunit. When a sigma factor is associated with the core the holoenzyme is formed, which can initiate transcription.

It carries out the reaction RNA(n) + a ribonucleoside 5'-triphosphate = RNA(n+1) + diphosphate. Functionally, promotes RNA polymerase assembly. Latches the N- and C-terminal regions of the beta' subunit thereby facilitating its interaction with the beta and alpha subunits. The protein is DNA-directed RNA polymerase subunit omega of Kosmotoga olearia (strain ATCC BAA-1733 / DSM 21960 / TBF 19.5.1).